The sequence spans 379 residues: Succinyl-diaminopimelate desuccinylase (379 aa).

H68 provides a ligand contact to Zn(2+). D70 is an active-site residue. Zn(2+) is bound at residue D101. Catalysis depends on E135, which acts as the Proton acceptor. Zn(2+) contacts are provided by E136, E164, and H350.

This sequence belongs to the peptidase M20A family. DapE subfamily. Homodimer. Zn(2+) is required as a cofactor. Co(2+) serves as cofactor.

It catalyses the reaction N-succinyl-(2S,6S)-2,6-diaminopimelate + H2O = (2S,6S)-2,6-diaminopimelate + succinate. Its pathway is amino-acid biosynthesis; L-lysine biosynthesis via DAP pathway; LL-2,6-diaminopimelate from (S)-tetrahydrodipicolinate (succinylase route): step 3/3. In terms of biological role, catalyzes the hydrolysis of N-succinyl-L,L-diaminopimelic acid (SDAP), forming succinate and LL-2,6-diaminopimelate (DAP), an intermediate involved in the bacterial biosynthesis of lysine and meso-diaminopimelic acid, an essential component of bacterial cell walls. This is Succinyl-diaminopimelate desuccinylase from Bordetella bronchiseptica (strain ATCC BAA-588 / NCTC 13252 / RB50) (Alcaligenes bronchisepticus).